We begin with the raw amino-acid sequence, 254 residues long: Emerin (254 aa).

Met-1 bears the N-acetylmethionine mark. The 45-residue stretch at 1 to 45 (MDNYADLSDTELTTLLRRYNIPHGPVVGSTRRLYEKKIFEYETQR) folds into the LEM domain. 2 positions are modified to phosphoserine: Ser-8 and Ser-29. Residues 46–222 (RRLSPPSSSA…PGAGLGQDRQ (177 aa)) are interaction with F-actin. The residue at position 49 (Ser-49) is a Phosphoserine; by PKA. 7 positions are modified to phosphoserine: Ser-54, Ser-60, Ser-87, Ser-98, Ser-141, Ser-142, and Ser-143. The residue at position 161 (Tyr-161) is a Phosphotyrosine. The segment at 168–186 (RPVSASRSSLDLSYYPTSS) is interaction with CTNNB1. Phosphoserine is present on residues Ser-171, Ser-173, and Ser-175. The helical transmembrane segment at 223–243 (VPLWGQLLLFLVFVIVLFFIY) threads the bilayer.

Interacts with lamins A and C, BANF1, GMCL, BCLAF1 and YTHDC1/YT521. Interacts with TMEM43; the interaction retains emerin in the nuclear inner membrane. Interacts with SUN1 and SUN2. Interacts with ACTB, SPTAN1, F-actin, CTNNB1 and beta-tubulin. Interacts with TMEM201. Interacts with NEMP1. Post-translationally, found in four different phosphorylated forms, three of which appear to be associated with the cell cycle. Skeletal muscle, heart, colon, testis, ovary and pancreas.

The protein resides in the nucleus inner membrane. The protein localises to the nucleus outer membrane. Functionally, stabilizes and promotes the formation of a nuclear actin cortical network. Stimulates actin polymerization in vitro by binding and stabilizing the pointed end of growing filaments. Inhibits beta-catenin activity by preventing its accumulation in the nucleus. Acts by influencing the nuclear accumulation of beta-catenin through a CRM1-dependent export pathway. Links centrosomes to the nuclear envelope via a microtubule association. Required for proper localization of non-farnesylated prelamin-A/C. Together with NEMP1, contributes to nuclear envelope stiffness in germ cells. EMD and BAF are cooperative cofactors of HIV-1 infection. Association of EMD with the viral DNA requires the presence of BAF and viral integrase. The association of viral DNA with chromatin requires the presence of BAF and EMD. This is Emerin (EMD) from Homo sapiens (Human).